The following is a 324-amino-acid chain: Calpain-2 catalytic subunit (324 aa).

A domain III region spans residues 1-138 (YPNTFWMNPQ…KKADYQVVDD (138 aa)). A linker region spans residues 139–153 (EIEADLEENDASEDD). Positions 158–324 (FRRLFAQLAG…LISWLCFSVL (167 aa)) are domain IV. Residues A166, D169, E171, E176, D209, D211, S213, K215, E220, D239, D241, S243, T245, E250, D282, and N285 each contribute to the Ca(2+) site. EF-hand domains lie at 190–224 (DIKS…FYIL) and 226–261 (TKIQ…AGFK).

This sequence belongs to the peptidase C2 family. As to quaternary structure, forms a heterodimer with a small (regulatory) subunit (CAPNS1). Interacts with CPEB3; this leads to cleavage of CPEB3. It depends on Ca(2+) as a cofactor. Ubiquitous.

It is found in the cytoplasm. Its subcellular location is the cell membrane. It catalyses the reaction Broad endopeptidase specificity.. Its activity is regulated as follows. Activated by 200-1000 micromolar concentrations of calcium and inhibited by calpastatin. Calcium-regulated non-lysosomal thiol-protease which catalyzes limited proteolysis of substrates involved in cytoskeletal remodeling and signal transduction. Proteolytically cleaves MYOC at 'Arg-226'. Proteolytically cleaves CPEB3 following neuronal stimulation which abolishes CPEB3 translational repressor activity, leading to translation of CPEB3 target mRNAs. The polypeptide is Calpain-2 catalytic subunit (CAPN2) (Sus scrofa (Pig)).